A 428-amino-acid polypeptide reads, in one-letter code: MRRLYQTVCTLALLLVGLQAAHADDIIDVIGGQEGAMPVAVIPFAVTGEIPTPDQDIARVISDNLARSGRFEVLPREELVARPAGLDDTRFSAWRALGMDYLVTGRMEMDGHRVSVTFELLDVFRGNRIEGRRYRLHPDNLRSLAHAISDIVFEEVVGLPGVFGTQIAYVQVEERNDQRIHRLMVADADGQRPREILESRQPIMSPAWSPERDRLAYVSFEGGRSEIYVQNLRSGQRDRIASFRGINSAPAWSPDGRHLAVTLSRDGRANIYLLRLDDGHVRRLTDHWAIDTEPTFSPDGERIAFTSDRGGRPQVYTLAVNGPGGVERVTFDGDYNARPNWSPDGRRIAMVHRHNGSFRIAVHDLESDRTRVLTDGPWDESPVFAPNGDMIMYSAGGSGDSRLRTVSVHGRANQALPRAGGLTREPAW.

Residues 1–23 (MRRLYQTVCTLALLLVGLQAAHA) form the signal peptide.

Belongs to the TolB family. The Tol-Pal system is composed of five core proteins: the inner membrane proteins TolA, TolQ and TolR, the periplasmic protein TolB and the outer membrane protein Pal. They form a network linking the inner and outer membranes and the peptidoglycan layer.

The protein localises to the periplasm. In terms of biological role, part of the Tol-Pal system, which plays a role in outer membrane invagination during cell division and is important for maintaining outer membrane integrity. This is Tol-Pal system protein TolB from Alkalilimnicola ehrlichii (strain ATCC BAA-1101 / DSM 17681 / MLHE-1).